The following is a 180-amino-acid chain: Acireductone dioxygenase (180 aa).

4 residues coordinate Fe(2+): H97, H99, E103, and H141. Residues H97, H99, E103, and H141 each contribute to the Ni(2+) site.

This sequence belongs to the acireductone dioxygenase (ARD) family. Monomer. It depends on Fe(2+) as a cofactor. Ni(2+) serves as cofactor.

It carries out the reaction 1,2-dihydroxy-5-(methylsulfanyl)pent-1-en-3-one + O2 = 3-(methylsulfanyl)propanoate + CO + formate + 2 H(+). The catalysed reaction is 1,2-dihydroxy-5-(methylsulfanyl)pent-1-en-3-one + O2 = 4-methylsulfanyl-2-oxobutanoate + formate + 2 H(+). It participates in amino-acid biosynthesis; L-methionine biosynthesis via salvage pathway; L-methionine from S-methyl-5-thio-alpha-D-ribose 1-phosphate: step 5/6. Its function is as follows. Catalyzes 2 different reactions between oxygen and the acireductone 1,2-dihydroxy-3-keto-5-methylthiopentene (DHK-MTPene) depending upon the metal bound in the active site. Fe-containing acireductone dioxygenase (Fe-ARD) produces formate and 2-keto-4-methylthiobutyrate (KMTB), the alpha-ketoacid precursor of methionine in the methionine recycle pathway. Ni-containing acireductone dioxygenase (Ni-ARD) produces methylthiopropionate, carbon monoxide and formate, and does not lie on the methionine recycle pathway. In Klebsiella pneumoniae subsp. pneumoniae (strain ATCC 700721 / MGH 78578), this protein is Acireductone dioxygenase.